The following is a 303-amino-acid chain: Probable endonuclease 4 (303 aa).

9 residues coordinate Zn(2+): H78, H118, E154, D188, H191, H222, D235, H237, and E267.

The protein belongs to the AP endonuclease 2 family. It depends on Zn(2+) as a cofactor.

The enzyme catalyses Endonucleolytic cleavage to 5'-phosphooligonucleotide end-products.. In terms of biological role, endonuclease IV plays a role in DNA repair. It cleaves phosphodiester bonds at apurinic or apyrimidinic (AP) sites, generating a 3'-hydroxyl group and a 5'-terminal sugar phosphate. The chain is Probable endonuclease 4 from Mycoplasmoides gallisepticum (strain R(low / passage 15 / clone 2)) (Mycoplasma gallisepticum).